Consider the following 139-residue polypeptide: Large ribosomal subunit protein uL16 (139 aa).

It belongs to the universal ribosomal protein uL16 family. As to quaternary structure, part of the 50S ribosomal subunit.

Binds 23S rRNA and is also seen to make contacts with the A and possibly P site tRNAs. In Protochlamydia amoebophila (strain UWE25), this protein is Large ribosomal subunit protein uL16.